A 191-amino-acid polypeptide reads, in one-letter code: Transcription factor FapR (191 aa).

This sequence belongs to the FapR family.

In terms of biological role, transcriptional factor involved in regulation of membrane lipid biosynthesis by repressing genes involved in fatty acid and phospholipid metabolism. This is Transcription factor FapR from Oceanobacillus iheyensis (strain DSM 14371 / CIP 107618 / JCM 11309 / KCTC 3954 / HTE831).